We begin with the raw amino-acid sequence, 152 residues long: Deoxyuridine 5'-triphosphate nucleotidohydrolase (152 aa).

Substrate-binding positions include R71–G73, N84, and T88–D90.

It belongs to the dUTPase family. Mg(2+) serves as cofactor.

The enzyme catalyses dUTP + H2O = dUMP + diphosphate + H(+). It participates in pyrimidine metabolism; dUMP biosynthesis; dUMP from dCTP (dUTP route): step 2/2. In terms of biological role, this enzyme is involved in nucleotide metabolism: it produces dUMP, the immediate precursor of thymidine nucleotides and it decreases the intracellular concentration of dUTP so that uracil cannot be incorporated into DNA. The protein is Deoxyuridine 5'-triphosphate nucleotidohydrolase of Maricaulis maris (strain MCS10) (Caulobacter maris).